A 257-amino-acid chain; its full sequence is tRNA pseudouridine synthase A (257 aa).

The active-site Nucleophile is Asp-53. Substrate is bound at residue Tyr-111.

Belongs to the tRNA pseudouridine synthase TruA family. In terms of assembly, homodimer.

The catalysed reaction is uridine(38/39/40) in tRNA = pseudouridine(38/39/40) in tRNA. Its function is as follows. Formation of pseudouridine at positions 38, 39 and 40 in the anticodon stem and loop of transfer RNAs. The protein is tRNA pseudouridine synthase A of Xanthomonas euvesicatoria pv. vesicatoria (strain 85-10) (Xanthomonas campestris pv. vesicatoria).